The following is a 211-amino-acid chain: Small ribosomal subunit protein uS3 (211 aa).

Residues L38–K106 form the KH type-2 domain.

Belongs to the universal ribosomal protein uS3 family. Part of the 30S ribosomal subunit. Forms a tight complex with proteins S10 and S14.

Its function is as follows. Binds the lower part of the 30S subunit head. Binds mRNA in the 70S ribosome, positioning it for translation. The chain is Small ribosomal subunit protein uS3 from Ehrlichia ruminantium (strain Welgevonden).